The following is a 349-amino-acid chain: ALA-interacting subunit 3 (349 aa).

The segment covering 1 to 21 (MSSNTASSSAGAAGSGDSSAA) has biased composition (low complexity). The tract at residues 1–30 (MSSNTASSSAGAAGSGDSSAARKNSKRPKY) is disordered. The residue at position 2 (Ser2) is an N-acetylserine. The chain crosses the membrane as a helical span at residues 50-70 (VISTFLIVSVIFIPLGVISLF). N-linked (GlcNAc...) asparagine glycans are attached at residues Asn181, Asn190, and Asn223. Residues 305–325 (LGIAYLTVGGICFILALAFTI) form a helical membrane-spanning segment.

Belongs to the CDC50/LEM3 family. In terms of assembly, interacts with ALA2 and ALA3 in a heterologous system. In terms of tissue distribution, expressed in roots, leaves, stems, flowers and siliques.

It localises to the golgi apparatus membrane. Its subcellular location is the prevacuolar compartment membrane. The protein localises to the endoplasmic reticulum membrane. Its function is as follows. Required for the lipid transport activity of the ALA/ALIS P4-ATPase complex. This chain is ALA-interacting subunit 3 (ALIS3), found in Arabidopsis thaliana (Mouse-ear cress).